The chain runs to 103 residues: Small ribosomal subunit protein uS10 (103 aa).

This sequence belongs to the universal ribosomal protein uS10 family. In terms of assembly, part of the 30S ribosomal subunit.

Functionally, involved in the binding of tRNA to the ribosomes. This Borrelia duttonii (strain Ly) protein is Small ribosomal subunit protein uS10.